We begin with the raw amino-acid sequence, 499 residues long: Xylulose kinase (499 aa).

Met-81–His-82 contacts substrate. Asp-239 (proton acceptor) is an active-site residue.

This sequence belongs to the FGGY kinase family.

It carries out the reaction D-xylulose + ATP = D-xylulose 5-phosphate + ADP + H(+). Functionally, catalyzes the phosphorylation of D-xylulose to D-xylulose 5-phosphate. The sequence is that of Xylulose kinase from Bacillus subtilis (strain 168).